The chain runs to 1187 residues: MATESTTNTTTIIARADQHDIDLHKASDRVNFGSIKEPIDVPYLLGVQTDSFDWLIGNERWKARVEEDEKNGTNTVAHTSGLDEVFNEISPIENFAQTMSLTFSDPYFEEPRHTVQECKEKDYTYSAPLYVNAEFENGDTGEIKSQTVFMGDFPLQTPHGTFIIGGTERVIVSQLVRSPGVYFDRQQDRTSDKEVFGAKIIPSRGAWLEFEIDKKDQPQVRVDRKRKQSAIVFLMAIGMTKSEIAQAFKDYPLVLDALEKETLGTQDEALVDLYRKIRPADTPTPEAGKNLLDSFYFNTKRYDLARVGRYKINRKLGVEADFNDRSLHQEDIIATIKYLVALHDGAATFPGKRNGEDVDLRVDVDDIDHFGNRRIRQVGELIQNQLRTGLSRMERVVRERMTTQDAEAITPQSLINIRPVNATIKEFFGTSQLSQFMDQNNPLSGVTNKRRLSALGPGGLSRDRASMEVRDVHPSHFGRMCPIESPEGPNIGLIGSLATFGRVNPFGFIETPYRKVVNGHVTDEVEYMTADRDLDHVIAQANQELDENGNFVQKSALARVGEEEAVDVPVSSVDYMDVSPRQMVSLGASLIPFLEHDEGHRALMGTNMQRQAVPLIESERPLVGTGSEWRAANDSGDVIKSEKDGVVTYVSADLIRVMNDDGTTSSYKLAKFQRSNQTTCYNQRPIVHDGERVEAGSVMADGPAIQNGDLALGKNLLIAFMPWNGYNYEDAVIISQRLVQDDTLSSIHIEEYEIDARETKLGAEEITRDLPNVGEDAVANLDERGIIRIGAEVEAGDILVGKVTPKGETELTPEERLLRAIFGEKSREVRDTSLRVPHGETGTVIGVKEITREDAEEDGDELPNGVNQMIRVYIAQHRKITVGDKLSGRHGNKGCISRILPEEDMPFLADGTPVDIMLNPLGVPSRMNLGQVLELHLGWIAHSGWDISLDPNLEAEWKKLIPSGAEKAEPNTPVATPVFDGVKPEVLKGLLSTTLPNRDGDRLVGPDGKATLFDGRTGEPYTKPISVGYMYMLKLHHLVDDKIHARSTGPYSMITQQPLGGKAQFGGQRFGEMEVWALEAYGAAYTLHEMMTTKSDDVDGRVRVYGAIVKGDNLPPAGIPESFKVLLKEMQSLSLNVEVLNAEGVAIDMKDEDDDPASSADDLGFNIGARPDAAAKEDQKAEEPEYQ.

The segment at 1150 to 1187 (KDEDDDPASSADDLGFNIGARPDAAAKEDQKAEEPEYQ) is disordered. Basic and acidic residues predominate over residues 1173-1187 (AAAKEDQKAEEPEYQ).

This sequence belongs to the RNA polymerase beta chain family. As to quaternary structure, the RNAP catalytic core consists of 2 alpha, 1 beta, 1 beta' and 1 omega subunit. When a sigma factor is associated with the core the holoenzyme is formed, which can initiate transcription.

The catalysed reaction is RNA(n) + a ribonucleoside 5'-triphosphate = RNA(n+1) + diphosphate. In terms of biological role, DNA-dependent RNA polymerase catalyzes the transcription of DNA into RNA using the four ribonucleoside triphosphates as substrates. This is DNA-directed RNA polymerase subunit beta from Bifidobacterium longum (strain DJO10A).